Here is a 198-residue protein sequence, read N- to C-terminus: Cytochrome c oxidase subunit 2 (198 aa).

The chain crosses the membrane as a helical span at residues 1-13 (AICSLVLYLLTLM). At 14-26 (LMEKLSSNTVDAQ) the chain is on the mitochondrial matrix side. A helical membrane pass occupies residues 27–54 (EVELIWTILPAIVLILLALPSLQILYMM). Residues 55-198 (DEIDEPDLTL…WSSLLSTSSL (144 aa)) lie on the Mitochondrial intermembrane side of the membrane. 6 residues coordinate Cu cation: His128, Cys163, Glu165, Cys167, His171, and Met174. Glu165 serves as a coordination point for Mg(2+).

This sequence belongs to the cytochrome c oxidase subunit 2 family. As to quaternary structure, component of the cytochrome c oxidase (complex IV, CIV), a multisubunit enzyme composed of 14 subunits. The complex is composed of a catalytic core of 3 subunits MT-CO1, MT-CO2 and MT-CO3, encoded in the mitochondrial DNA, and 11 supernumerary subunits COX4I, COX5A, COX5B, COX6A, COX6B, COX6C, COX7A, COX7B, COX7C, COX8 and NDUFA4, which are encoded in the nuclear genome. The complex exists as a monomer or a dimer and forms supercomplexes (SCs) in the inner mitochondrial membrane with NADH-ubiquinone oxidoreductase (complex I, CI) and ubiquinol-cytochrome c oxidoreductase (cytochrome b-c1 complex, complex III, CIII), resulting in different assemblies (supercomplex SCI(1)III(2)IV(1) and megacomplex MCI(2)III(2)IV(2)). Found in a complex with TMEM177, COA6, COX18, COX20, SCO1 and SCO2. Interacts with TMEM177 in a COX20-dependent manner. Interacts with COX20. Interacts with COX16. Requires Cu cation as cofactor.

The protein localises to the mitochondrion inner membrane. The enzyme catalyses 4 Fe(II)-[cytochrome c] + O2 + 8 H(+)(in) = 4 Fe(III)-[cytochrome c] + 2 H2O + 4 H(+)(out). Its function is as follows. Component of the cytochrome c oxidase, the last enzyme in the mitochondrial electron transport chain which drives oxidative phosphorylation. The respiratory chain contains 3 multisubunit complexes succinate dehydrogenase (complex II, CII), ubiquinol-cytochrome c oxidoreductase (cytochrome b-c1 complex, complex III, CIII) and cytochrome c oxidase (complex IV, CIV), that cooperate to transfer electrons derived from NADH and succinate to molecular oxygen, creating an electrochemical gradient over the inner membrane that drives transmembrane transport and the ATP synthase. Cytochrome c oxidase is the component of the respiratory chain that catalyzes the reduction of oxygen to water. Electrons originating from reduced cytochrome c in the intermembrane space (IMS) are transferred via the dinuclear copper A center (CU(A)) of subunit 2 and heme A of subunit 1 to the active site in subunit 1, a binuclear center (BNC) formed by heme A3 and copper B (CU(B)). The BNC reduces molecular oxygen to 2 water molecules using 4 electrons from cytochrome c in the IMS and 4 protons from the mitochondrial matrix. The chain is Cytochrome c oxidase subunit 2 (MT-CO2) from Tinamus major (Great tinamou).